The primary structure comprises 333 residues: Chemokine XC receptor 1 (333 aa).

At 1–31 the chain is on the extracellular side; the sequence is MESSGNPESTTFFYYDLQSQPCENQAWVFAT. Residues 32–59 traverse the membrane as a helical segment; the sequence is LATTVLYCLVFLLSLVGNSLVLWVLVKY. The Cytoplasmic segment spans residues 60–69; sequence ESLESLTNIF. A helical transmembrane segment spans residues 70-89; it reads ILNLCLSDLVFACLLPVWIS. Over 90–103 the chain is Extracellular; that stretch reads PYHWGWVLGDFLCK. Cysteine 102 and cysteine 175 are disulfide-bonded. A helical membrane pass occupies residues 104–125; that stretch reads LLNMIFSISLYSSIFFLTIMTI. Over 126-142 the chain is Cytoplasmic; it reads HRYLSVVSPLSTLRVPT. A helical membrane pass occupies residues 143–167; the sequence is LRCRVLVTMAVWVASILSSILDTIF. Residues 168–190 lie on the Extracellular side of the membrane; the sequence is HKVLSSGCDYSELTWYLTSVYQH. A helical membrane pass occupies residues 191 to 209; the sequence is NLFFLLSLGIILFCYVEIL. Residues 210-225 lie on the Cytoplasmic side of the membrane; the sequence is RTLFRSRSKRRHRTVK. A helical transmembrane segment spans residues 226–250; it reads LIFAIVVAYFLSWGPYNFTLFLQTL. The Extracellular segment spans residues 251–267; sequence FRTQIIRSCEAKQQLEY. A helical transmembrane segment spans residues 268-291; the sequence is ALLICRNLAFSHCCFNPVLYVFVG. Residues 292 to 333 lie on the Cytoplasmic side of the membrane; that stretch reads VKFRTHLKHVLRQFWFCRLQAPSPASIPHSPGAFAYEGASFY.

This sequence belongs to the G-protein coupled receptor 1 family.

Its subcellular location is the cell membrane. Receptor for chemokines SCYC1 and SCYC2. Subsequently transduces a signal by increasing the intracellular calcium ions level. Receptor for XCL1/Lymphotactin. This Homo sapiens (Human) protein is Chemokine XC receptor 1 (XCR1).